The following is an 849-amino-acid chain: Probable receptor-like protein kinase At1g30570 (849 aa).

The first 28 residues, 1–28 (MSKLRKKYLEHLLCVLIFFTYVIGYGEA), serve as a signal peptide directing secretion. Residues 29–429 (QSKSFLVDCG…GHSVSDSKMR (401 aa)) lie on the Extracellular side of the membrane. N-linked (GlcNAc...) asparagine glycans are attached at residues Asn40, Asn57, Asn94, Asn122, Asn158, Asn268, Asn271, Asn305, and Asn343. A helical transmembrane segment spans residues 430–450 (IIWISVGAGIAIIIFFVFLGI). The Cytoplasmic segment spans residues 451 to 849 (LVVCLCKKRR…QTGSALHNSA (399 aa)). Positions 520-793 (FDDGLAIGVG…GEVLWSLEYV (274 aa)) constitute a Protein kinase domain. ATP contacts are provided by residues 526-534 (IGVGGFGKV) and Lys548. Asp644 (proton acceptor) is an active-site residue. The segment at 810-849 (FSSSQAVEEAPESFTLPACSNQDSSETEQSQTGSALHNSA) is disordered. Positions 827–849 (ACSNQDSSETEQSQTGSALHNSA) are enriched in polar residues.

This sequence belongs to the protein kinase superfamily. Ser/Thr protein kinase family.

It localises to the cell membrane. In Arabidopsis thaliana (Mouse-ear cress), this protein is Probable receptor-like protein kinase At1g30570.